The primary structure comprises 656 residues: Chaperone protein HtpG (656 aa).

Positions 1–364 (MSEQNPTDSK…SADLPLNVSR (364 aa)) are a; substrate-binding. Residues 365-583 (EILQESRDVK…EGELSPQMIQ (219 aa)) are b. The interval 584-656 (MLKQMGQDVP…LRRVNELLMK (73 aa)) is c.

This sequence belongs to the heat shock protein 90 family. As to quaternary structure, homodimer.

It localises to the cytoplasm. Functionally, molecular chaperone. Has ATPase activity. The chain is Chaperone protein HtpG from Psychrobacter arcticus (strain DSM 17307 / VKM B-2377 / 273-4).